The chain runs to 344 residues: tRNA(Ile)-lysidine synthase (344 aa).

An ATP-binding site is contributed by 35-40 (SGGPDS).

The protein belongs to the tRNA(Ile)-lysidine synthase family.

Its subcellular location is the cytoplasm. It catalyses the reaction cytidine(34) in tRNA(Ile2) + L-lysine + ATP = lysidine(34) in tRNA(Ile2) + AMP + diphosphate + H(+). In terms of biological role, ligates lysine onto the cytidine present at position 34 of the AUA codon-specific tRNA(Ile) that contains the anticodon CAU, in an ATP-dependent manner. Cytidine is converted to lysidine, thus changing the amino acid specificity of the tRNA from methionine to isoleucine. In Methylobacterium sp. (strain 4-46), this protein is tRNA(Ile)-lysidine synthase.